The following is a 156-amino-acid chain: Small ribosomal subunit protein uS7 (156 aa).

It belongs to the universal ribosomal protein uS7 family. In terms of assembly, part of the 30S ribosomal subunit. Contacts proteins S9 and S11.

Its function is as follows. One of the primary rRNA binding proteins, it binds directly to 16S rRNA where it nucleates assembly of the head domain of the 30S subunit. Is located at the subunit interface close to the decoding center, probably blocks exit of the E-site tRNA. This Acetivibrio thermocellus (strain ATCC 27405 / DSM 1237 / JCM 9322 / NBRC 103400 / NCIMB 10682 / NRRL B-4536 / VPI 7372) (Clostridium thermocellum) protein is Small ribosomal subunit protein uS7.